Consider the following 248-residue polypeptide: Triosephosphate isomerase (248 aa).

9–11 (NWK) lines the substrate pocket. Catalysis depends on His94, which acts as the Electrophile. The active-site Proton acceptor is Glu166. Residues Gly172, Ser212, and 233–234 (GG) each bind substrate.

This sequence belongs to the triosephosphate isomerase family. Homodimer.

It localises to the cytoplasm. The catalysed reaction is D-glyceraldehyde 3-phosphate = dihydroxyacetone phosphate. Its pathway is carbohydrate biosynthesis; gluconeogenesis. It functions in the pathway carbohydrate degradation; glycolysis; D-glyceraldehyde 3-phosphate from glycerone phosphate: step 1/1. Its function is as follows. Involved in the gluconeogenesis. Catalyzes stereospecifically the conversion of dihydroxyacetone phosphate (DHAP) to D-glyceraldehyde-3-phosphate (G3P). The protein is Triosephosphate isomerase of Clostridium beijerinckii (strain ATCC 51743 / NCIMB 8052) (Clostridium acetobutylicum).